Consider the following 585-residue polypeptide: MKPFVIRNLPRFQSTLRSSLLYTNHRPSSRFSLSTRRFTTGATYIRRWKATAAQTLKLSAVNSTVMMKPAKIALDQFIASLFTFLLLYILRRSSNKNKKNRGLVVSQNDTVSKNLETEVDSGTDVIIVGAGVAGSALAHTLGKEGRRVHVIERDFSEQDRIVGELLQPGGYLKLIELGLEDCVKKIDAQRVLGYVLFKDGKHTKLAYPLETFDSDVAGRSFHNGRFVQRMREKALTLSNVRLEQGTVTSLLEEHGTIKGVRYRTKEGNEFRSFAPLTIVCDGCFSNLRRSLCKPKVDVPSTFVGLVLENCELPFANHGHVVLGDPSPILMYPISSSEVRCLVDVPGQKLPPIANGEMAKYLKTRVAPQVPTKVREAFITAVEKGNIRTMPNRSMPADPIPTPGALLLGDAFNMRHPLTGGGMTVALADIVVLRDLLRPIRNLNDKEALSKYIESFYTLRKPVASTINTLADALYKVFLASSDEARTEMREACFDYLSLGGVFSSGPVALLSGLNPRPLSLVLHFFAVAIYAVCRLMLPFPSIESFWLGARIISSASSIIFPIIKAEGVRQMFFPRTIPAIYRAPP.

A mitochondrion-targeting transit peptide spans 1-45; that stretch reads MKPFVIRNLPRFQSTLRSSLLYTNHRPSSRFSLSTRRFTTGATYI. A helical membrane pass occupies residues 70–90; the sequence is AKIALDQFIASLFTFLLLYIL. FAD contacts are provided by residues 132 to 133, 152 to 153, Arg160, Arg231, Val247, Asp409, and Met422; these read VA and ER. The next 3 membrane-spanning stretches (helical) occupy residues 493–513, 520–540, and 545–565; these read FDYLSLGGVFSSGPVALLSGL, LVLHFFAVAIYAVCRLMLPFP, and FWLGARIISSASSIIFPIIKA.

Belongs to the squalene monooxygenase family. It depends on FAD as a cofactor. Expressed mainly in inflorescences. Detected in seedlings, leaves, stems, and siliques.

The protein localises to the mitochondrion membrane. The catalysed reaction is squalene + reduced [NADPH--hemoprotein reductase] + O2 = (S)-2,3-epoxysqualene + oxidized [NADPH--hemoprotein reductase] + H2O + H(+). The protein operates within terpene metabolism; lanosterol biosynthesis; lanosterol from farnesyl diphosphate: step 2/3. Functionally, catalyzes the stereospecific oxidation of squalene to (S)-2,3-epoxysqualene, and is considered to be a rate-limiting enzyme in steroid biosynthesis. Produces primarily oxidosqualene. The protein is Squalene epoxidase 2, mitochondrial (SQE2) of Arabidopsis thaliana (Mouse-ear cress).